A 145-amino-acid polypeptide reads, in one-letter code: Acidic phospholipase A2 S1-11 (145 aa).

The N-terminal stretch at 1–19 (MYPAHLLVLLAVCVSLLGA) is a signal peptide. Positions 20 to 27 (SDMPPQPL) are excised as a propeptide. 5 cysteine pairs are disulfide-bonded: C38/C99, C54/C144, C56/C72, C71/C127, and C106/C118. Ca(2+) contacts are provided by Y55, G57, and G59. The active site involves H75. Position 76 (D76) interacts with Ca(2+). D121 is a catalytic residue.

Belongs to the phospholipase A2 family. Group I subfamily. D49 sub-subfamily. The cofactor is Ca(2+). Post-translationally, this enzyme lacks two of the seven disulfide bonds found in similar PLA2 proteins. In terms of tissue distribution, expressed by the venom gland.

The protein resides in the secreted. The catalysed reaction is a 1,2-diacyl-sn-glycero-3-phosphocholine + H2O = a 1-acyl-sn-glycero-3-phosphocholine + a fatty acid + H(+). Functionally, snake venom phospholipase A2 (PLA2) that inhibits collagen-induced platelet aggregation. PLA2 catalyzes the calcium-dependent hydrolysis of the 2-acyl groups in 3-sn-phosphoglycerides. This chain is Acidic phospholipase A2 S1-11, found in Austrelaps superbus (Lowland copperhead snake).